Here is a 210-residue protein sequence, read N- to C-terminus: Guanylate kinase (210 aa).

The 179-residue stretch at 6–184 (GTLYIISAPS…ALQDLKCIIQ (179 aa)) folds into the Guanylate kinase-like domain. 13 to 20 (APSGAGKT) lines the ATP pocket.

It belongs to the guanylate kinase family.

It localises to the cytoplasm. It carries out the reaction GMP + ATP = GDP + ADP. Its function is as follows. Essential for recycling GMP and indirectly, cGMP. The polypeptide is Guanylate kinase (Nitrosospira multiformis (strain ATCC 25196 / NCIMB 11849 / C 71)).